Reading from the N-terminus, the 294-residue chain is Foldase protein PrsA 1 (294 aa).

A signal peptide spans 1–21 (MTKLKKVMISLVAATLLLLAG). Residue cysteine 22 is the site of N-palmitoyl cysteine attachment. The S-diacylglycerol cysteine moiety is linked to residue cysteine 22. The PpiC domain maps to 135–226 (EPNITVRHIL…YGYHLIQLVK (92 aa)).

The protein belongs to the PrsA family.

It is found in the cell membrane. It carries out the reaction [protein]-peptidylproline (omega=180) = [protein]-peptidylproline (omega=0). In terms of biological role, plays a major role in protein secretion by helping the post-translocational extracellular folding of several secreted proteins. The sequence is that of Foldase protein PrsA 1 (prsA1) from Listeria innocua serovar 6a (strain ATCC BAA-680 / CLIP 11262).